The following is a 258-amino-acid chain: Hydroxyacylglutathione hydrolase cytoplasmic (258 aa).

Zn(2+) contacts are provided by His-54 and His-56. Asp-58 and His-59 together coordinate Fe cation. Positions 112 and 135 each coordinate Zn(2+). Fe cation is bound at residue Asp-135. Residues 144–146 and 174–176 contribute to the substrate site; these read KFF and HEY. Residue His-174 participates in Fe cation binding.

Belongs to the metallo-beta-lactamase superfamily. Glyoxalase II family. In terms of assembly, homodimer. The cofactor is Fe(2+). Zn(2+) is required as a cofactor. It depends on Fe(3+) as a cofactor. In terms of tissue distribution, mainly expressed in flowers and flower buds. Also detected in roots and leaves.

The protein localises to the cytoplasm. The catalysed reaction is an S-(2-hydroxyacyl)glutathione + H2O = a 2-hydroxy carboxylate + glutathione + H(+). The protein operates within secondary metabolite metabolism; methylglyoxal degradation; (R)-lactate from methylglyoxal: step 2/2. Its function is as follows. Thiolesterase that catalyzes the hydrolysis of S-D-lactoyl-glutathione to form glutathione and D-lactic acid. The chain is Hydroxyacylglutathione hydrolase cytoplasmic (GLX2-2) from Arabidopsis thaliana (Mouse-ear cress).